The primary structure comprises 114 residues: Pancreatic progenitor cell differentiation and proliferation factor (114 aa).

The residue at position 9 (S9) is a Phosphoserine. Disordered regions lie at residues G22–P47 and A75–S114. The span at S23–T33 shows a compositional bias: low complexity. Residues G102 to S114 show a composition bias toward polar residues.

This sequence belongs to the PPDPF family.

Probable regulator of exocrine pancreas development. This is Pancreatic progenitor cell differentiation and proliferation factor (PPDPF) from Homo sapiens (Human).